The chain runs to 458 residues: Cysteine--tRNA ligase (458 aa).

Cys27 is a binding site for Zn(2+). The short motif at 29 to 39 (MTVYDYMHIGH) is the 'HIGH' region element. 3 residues coordinate Zn(2+): Cys208, His233, and Glu237. Positions 265–269 (KMSKS) match the 'KMSKS' region motif. Residue Lys268 participates in ATP binding.

The protein belongs to the class-I aminoacyl-tRNA synthetase family. As to quaternary structure, monomer. The cofactor is Zn(2+).

It localises to the cytoplasm. It carries out the reaction tRNA(Cys) + L-cysteine + ATP = L-cysteinyl-tRNA(Cys) + AMP + diphosphate. This chain is Cysteine--tRNA ligase, found in Coxiella burnetii (strain Dugway 5J108-111).